A 545-amino-acid polypeptide reads, in one-letter code: Glucose-6-phosphate isomerase (545 aa).

Glu351 acts as the Proton donor in catalysis. Active-site residues include His382 and Lys510.

This sequence belongs to the GPI family.

It is found in the cytoplasm. The catalysed reaction is alpha-D-glucose 6-phosphate = beta-D-fructose 6-phosphate. The protein operates within carbohydrate biosynthesis; gluconeogenesis. Its pathway is carbohydrate degradation; glycolysis; D-glyceraldehyde 3-phosphate and glycerone phosphate from D-glucose: step 2/4. Its function is as follows. Catalyzes the reversible isomerization of glucose-6-phosphate to fructose-6-phosphate. In Shewanella baltica (strain OS185), this protein is Glucose-6-phosphate isomerase.